Consider the following 129-residue polypeptide: Small ribosomal subunit protein uS11 (129 aa).

It belongs to the universal ribosomal protein uS11 family. Part of the 30S ribosomal subunit. Interacts with proteins S7 and S18. Binds to IF-3.

In terms of biological role, located on the platform of the 30S subunit, it bridges several disparate RNA helices of the 16S rRNA. Forms part of the Shine-Dalgarno cleft in the 70S ribosome. The protein is Small ribosomal subunit protein uS11 of Bartonella henselae (strain ATCC 49882 / DSM 28221 / CCUG 30454 / Houston 1) (Rochalimaea henselae).